The sequence spans 180 residues: UPF0149 protein XCV3523 (180 aa).

The protein belongs to the UPF0149 family.

This Xanthomonas euvesicatoria pv. vesicatoria (strain 85-10) (Xanthomonas campestris pv. vesicatoria) protein is UPF0149 protein XCV3523.